Here is a 728-residue protein sequence, read N- to C-terminus: Glycine--tRNA ligase (728 aa).

The N-terminal 32 residues, 1 to 32, are a transit peptide targeting the mitochondrion; sequence MPCLLPTLLRATRAALLLQSPRVVAAPASQRL. A WHEP-TRS domain is found at 52-108; the sequence is LLAPLRLAVRQQGDFVRKLKEDKAPQVDVDRAVAELKARKRVLEAKELALQPKDDIV. An N6-acetyllysine modification is found at K193. E288 provides a ligand contact to glycine. Residues 320–322 and 331–332 each bind ATP; these read RNE and RV. Glycine is bound at residue E339. Position 442 is a phosphotyrosine (Y442). 446–447 is a binding site for ATP; it reads EI. An N6-acetyllysine modification is found at K490. 565–567 lines the glycine pocket; that stretch reads EPS. ATP is bound at residue R572. Phosphoserine is present on S689. T725 is modified (phosphothreonine).

This sequence belongs to the class-II aminoacyl-tRNA synthetase family. As to quaternary structure, homodimer.

It is found in the cytoplasm. The protein localises to the mitochondrion. Its subcellular location is the cell projection. It localises to the axon. The protein resides in the secreted. It is found in the extracellular exosome. The enzyme catalyses tRNA(Gly) + glycine + ATP = glycyl-tRNA(Gly) + AMP + diphosphate. It catalyses the reaction 2 ATP + H(+) = P(1),P(4)-bis(5'-adenosyl) tetraphosphate + diphosphate. In terms of biological role, catalyzes the ATP-dependent ligation of glycine to the 3'-end of its cognate tRNA, via the formation of an aminoacyl-adenylate intermediate (Gly-AMP). Also produces diadenosine tetraphosphate (Ap4A), a universal pleiotropic signaling molecule needed for cell regulation pathways, by direct condensation of 2 ATPs. Thereby, may play a special role in Ap4A homeostasis. This chain is Glycine--tRNA ligase (Gars1), found in Rattus norvegicus (Rat).